A 227-amino-acid chain; its full sequence is Agamous-like MADS-box protein AGL8 homolog (227 aa).

The MADS-box domain occupies 3 to 57; that stretch reads RGRVQLKRIENKINRQVTFSKRRSGLLKKAHEISVLCDAEVGLIVFSTKGKLFEY. One can recognise a K-box domain in the interval 88-178; the sequence is PVSWTLEHRK…SKKVKEREKS (91 aa).

In terms of tissue distribution, flower specific.

It is found in the nucleus. Functionally, probable transcription factor. This Solanum lycopersicum (Tomato) protein is Agamous-like MADS-box protein AGL8 homolog (TDR4).